We begin with the raw amino-acid sequence, 188 residues long: Elongation factor P (188 aa).

The residue at position 34 (K34) is an N6-(3,6-diaminohexanoyl)-5-hydroxylysine.

The protein belongs to the elongation factor P family. In terms of processing, may be beta-lysylated on the epsilon-amino group of Lys-34 by the combined action of EpmA and EpmB, and then hydroxylated on the C5 position of the same residue by EpmC (if this protein is present). Lysylation is critical for the stimulatory effect of EF-P on peptide-bond formation. The lysylation moiety may extend toward the peptidyltransferase center and stabilize the terminal 3-CCA end of the tRNA. Hydroxylation of the C5 position on Lys-34 may allow additional potential stabilizing hydrogen-bond interactions with the P-tRNA.

The protein resides in the cytoplasm. It participates in protein biosynthesis; polypeptide chain elongation. Functionally, involved in peptide bond synthesis. Alleviates ribosome stalling that occurs when 3 or more consecutive Pro residues or the sequence PPG is present in a protein, possibly by augmenting the peptidyl transferase activity of the ribosome. Modification of Lys-34 is required for alleviation. This chain is Elongation factor P, found in Vibrio vulnificus (strain CMCP6).